Reading from the N-terminus, the 1042-residue chain is Ribosome biogenesis protein NOC1 (1042 aa).

6 disordered regions span residues 1–20 (MGLKRAARQQRDIGKPAFDE), 28–79 (GKID…AAKD), 101–128 (LVADVDSGNEGGGGPSQPKISSEQSLDQ), 148–214 (NRED…IPQD), 546–567 (LNGDKRDGGTPRKKSNPSGSLT), and 897–1020 (GKMT…LKTL). 2 stretches are compositionally biased toward basic and acidic residues: residues 9 to 18 (QQRDIGKPAF) and 63 to 79 (HPTEAEEHRDSHAAAKD). Residues 118–128 (PKISSEQSLDQ) are compositionally biased toward polar residues. Composition is skewed to acidic residues over residues 153–164 (NTEDEASPDEDA) and 173–194 (SDSDEGGGQEEMEKEDVDSFSD). A compositionally biased stretch (basic and acidic residues) spans 195-207 (NEEKVTEKVDSGE). A compositionally biased stretch (basic and acidic residues) spans 902–911 (KRDETKREFG). Residues 937-957 (NVDDDSDADLGDFDYSDDEED) show a composition bias toward acidic residues. A compositionally biased stretch (low complexity) spans 962-972 (DGSMSDIGMDS). The segment covering 978-994 (IFDDAGESDEQSSGEDE) has biased composition (acidic residues).

This sequence belongs to the CBF/MAK21 family. Interacts with NOC2. Forms a nucleolar complex with NOC2 that binds to 90S and 66S pre-ribosomes.

It localises to the nucleus. Its subcellular location is the nucleolus. Required for 60S ribosomal subunit synthesis. This Chaetomium thermophilum (strain DSM 1495 / CBS 144.50 / IMI 039719) (Thermochaetoides thermophila) protein is Ribosome biogenesis protein NOC1 (NOC1).